The following is a 510-amino-acid chain: Anaerobic nitric oxide reductase transcription regulator NorR (510 aa).

In terms of domain architecture, Sigma-54 factor interaction spans 188–417 (IIGNSQGMRT…LEHVIKRAAV (230 aa)). Residues 216 to 223 (GETGVGKE) and 279 to 288 (ADGGTLFLDE) each bind ATP. Positions 486–505 (WAATARQLELDSGNLHRLAK) form a DNA-binding region, H-T-H motif.

The protein operates within nitrogen metabolism; nitric oxide reduction. In terms of biological role, required for the expression of anaerobic nitric oxide (NO) reductase, acts as a transcriptional activator for at least the norVW operon. Activation also requires sigma-54. In Vibrio vulnificus (strain CMCP6), this protein is Anaerobic nitric oxide reductase transcription regulator NorR.